Reading from the N-terminus, the 66-residue chain is Large ribosomal subunit protein bL32 (66 aa).

It belongs to the bacterial ribosomal protein bL32 family.

This Rickettsia bellii (strain OSU 85-389) protein is Large ribosomal subunit protein bL32.